The primary structure comprises 132 residues: Putative esterase Ta0293 (132 aa).

It belongs to the thioesterase PaaI family.

In Thermoplasma acidophilum (strain ATCC 25905 / DSM 1728 / JCM 9062 / NBRC 15155 / AMRC-C165), this protein is Putative esterase Ta0293.